We begin with the raw amino-acid sequence, 356 residues long: UDP-N-acetylglucosamine--N-acetylmuramyl-(pentapeptide) pyrophosphoryl-undecaprenol N-acetylglucosamine transferase (356 aa).

UDP-N-acetyl-alpha-D-glucosamine-binding positions include 12–14 (TGG), N124, R163, S188, I242, 261–266 (ALTVSE), and Q287.

It belongs to the glycosyltransferase 28 family. MurG subfamily.

It is found in the cell inner membrane. The enzyme catalyses di-trans,octa-cis-undecaprenyl diphospho-N-acetyl-alpha-D-muramoyl-L-alanyl-D-glutamyl-meso-2,6-diaminopimeloyl-D-alanyl-D-alanine + UDP-N-acetyl-alpha-D-glucosamine = di-trans,octa-cis-undecaprenyl diphospho-[N-acetyl-alpha-D-glucosaminyl-(1-&gt;4)]-N-acetyl-alpha-D-muramoyl-L-alanyl-D-glutamyl-meso-2,6-diaminopimeloyl-D-alanyl-D-alanine + UDP + H(+). It participates in cell wall biogenesis; peptidoglycan biosynthesis. Functionally, cell wall formation. Catalyzes the transfer of a GlcNAc subunit on undecaprenyl-pyrophosphoryl-MurNAc-pentapeptide (lipid intermediate I) to form undecaprenyl-pyrophosphoryl-MurNAc-(pentapeptide)GlcNAc (lipid intermediate II). The sequence is that of UDP-N-acetylglucosamine--N-acetylmuramyl-(pentapeptide) pyrophosphoryl-undecaprenol N-acetylglucosamine transferase from Ectopseudomonas mendocina (strain ymp) (Pseudomonas mendocina).